The sequence spans 261 residues: Thiazole synthase (261 aa).

The Schiff-base intermediate with DXP role is filled by lysine 98. 1-deoxy-D-xylulose 5-phosphate-binding positions include glycine 159, 185-186 (AG), and 207-208 (AS).

This sequence belongs to the ThiG family. Homotetramer. Forms heterodimers with either ThiH or ThiS.

It is found in the cytoplasm. The catalysed reaction is [ThiS sulfur-carrier protein]-C-terminal-Gly-aminoethanethioate + 2-iminoacetate + 1-deoxy-D-xylulose 5-phosphate = [ThiS sulfur-carrier protein]-C-terminal Gly-Gly + 2-[(2R,5Z)-2-carboxy-4-methylthiazol-5(2H)-ylidene]ethyl phosphate + 2 H2O + H(+). It participates in cofactor biosynthesis; thiamine diphosphate biosynthesis. In terms of biological role, catalyzes the rearrangement of 1-deoxy-D-xylulose 5-phosphate (DXP) to produce the thiazole phosphate moiety of thiamine. Sulfur is provided by the thiocarboxylate moiety of the carrier protein ThiS. In vitro, sulfur can be provided by H(2)S. This chain is Thiazole synthase, found in Mycobacterium leprae (strain Br4923).